A 416-amino-acid polypeptide reads, in one-letter code: Gamma-glutamyl phosphate reductase (416 aa).

This sequence belongs to the gamma-glutamyl phosphate reductase family.

The protein resides in the cytoplasm. It catalyses the reaction L-glutamate 5-semialdehyde + phosphate + NADP(+) = L-glutamyl 5-phosphate + NADPH + H(+). Its pathway is amino-acid biosynthesis; L-proline biosynthesis; L-glutamate 5-semialdehyde from L-glutamate: step 2/2. Catalyzes the NADPH-dependent reduction of L-glutamate 5-phosphate into L-glutamate 5-semialdehyde and phosphate. The product spontaneously undergoes cyclization to form 1-pyrroline-5-carboxylate. The polypeptide is Gamma-glutamyl phosphate reductase (Salmonella arizonae (strain ATCC BAA-731 / CDC346-86 / RSK2980)).